Reading from the N-terminus, the 410-residue chain is Putative ribonuclease E (410 aa).

Positions Ser-39–Phe-119 constitute an S1 motif domain. Mg(2+) is bound by residues Asp-303 and Asp-346.

The protein belongs to the RNase E/G family. RNase E subfamily. In terms of assembly, component of the RNA degradosome, which is a multiprotein complex involved in RNA processing and mRNA degradation. Within the RNA degradosome, RNase E assembles into a homotetramer formed by a dimer of dimers. It depends on Mg(2+) as a cofactor.

It is found in the cytoplasm. The protein resides in the cell inner membrane. The catalysed reaction is Endonucleolytic cleavage of single-stranded RNA in A- and U-rich regions.. Its function is as follows. Endoribonuclease that plays a central role in RNA processing and decay. Required for the maturation of 5S and 16S rRNAs and the majority of tRNAs. Also involved in the degradation of most mRNAs. The sequence is that of Putative ribonuclease E (rne) from Buchnera aphidicola subsp. Baizongia pistaciae (strain Bp).